The primary structure comprises 402 residues: AA9 family lytic polysaccharide monooxygenase E (402 aa).

The first 16 residues, methionine 1–alanine 16, serve as a signal peptide directing secretion. Histidine 17 contacts Cu(2+). 2 disulfides stabilise this stretch: cysteine 72/cysteine 194 and cysteine 113/cysteine 117. The N-linked (GlcNAc...) asparagine glycan is linked to asparagine 75. Histidine 102 contacts Cu(2+). The N-linked (GlcNAc...) asparagine glycan is linked to asparagine 154. 2 residues coordinate O2: histidine 180 and glutamine 189. Tyrosine 191 lines the Cu(2+) pocket. A CBM1 domain is found at glycine 364–valine 400.

It belongs to the polysaccharide monooxygenase AA9 family. Cu(2+) serves as cofactor.

It localises to the secreted. It catalyses the reaction [(1-&gt;4)-beta-D-glucosyl]n+m + reduced acceptor + O2 = 4-dehydro-beta-D-glucosyl-[(1-&gt;4)-beta-D-glucosyl]n-1 + [(1-&gt;4)-beta-D-glucosyl]m + acceptor + H2O.. Lytic polysaccharide monooxygenase (LPMO) that depolymerizes crystalline and amorphous polysaccharides via the oxidation of scissile alpha- or beta-(1-4)-glycosidic bonds, yielding C1 or C4 oxidation products. Catalysis by LPMOs requires the reduction of the active-site copper from Cu(II) to Cu(I) by a reducing agent and H(2)O(2) or O(2) as a cosubstrate. The protein is AA9 family lytic polysaccharide monooxygenase E of Emericella nidulans (strain FGSC A4 / ATCC 38163 / CBS 112.46 / NRRL 194 / M139) (Aspergillus nidulans).